A 179-amino-acid chain; its full sequence is ATP-dependent protease subunit HslV (179 aa).

Thr6 is an active-site residue. 3 residues coordinate Na(+): Ser164, Cys167, and Thr170.

This sequence belongs to the peptidase T1B family. HslV subfamily. As to quaternary structure, a double ring-shaped homohexamer of HslV is capped on each side by a ring-shaped HslU homohexamer. The assembly of the HslU/HslV complex is dependent on binding of ATP.

The protein resides in the cytoplasm. The enzyme catalyses ATP-dependent cleavage of peptide bonds with broad specificity.. Its activity is regulated as follows. Allosterically activated by HslU binding. In terms of biological role, protease subunit of a proteasome-like degradation complex believed to be a general protein degrading machinery. This chain is ATP-dependent protease subunit HslV, found in Listeria innocua serovar 6a (strain ATCC BAA-680 / CLIP 11262).